Here is a 234-residue protein sequence, read N- to C-terminus: uncharacterized protein (234 aa).

An NADP(+)-binding site is contributed by 10 to 34 (VVTGASSGIGASIAETLANQGVKVV). Ser-143 is a substrate binding site. Tyr-156 serves as the catalytic Proton acceptor.

This sequence belongs to the short-chain dehydrogenases/reductases (SDR) family.

This is an uncharacterized protein from Staphylococcus saprophyticus subsp. saprophyticus (strain ATCC 15305 / DSM 20229 / NCIMB 8711 / NCTC 7292 / S-41).